A 346-amino-acid chain; its full sequence is MNTAPKQYGFYMPAEWYPHERCWMAWPCHHETWSKIGLDKAKMAYARVAKAIAQFEPVTLLVNPGDEDSATNLCKGHNIEIISLPINDSWTRDTGATFLINNEKQLAGVDWIHNAWGGNYADCSLDNLIASHLIKCTEAQYFHAPLVMEGGSFHVDGEGTILTSKECLLNSNRNPHLSQQEIEQYLINYLGAERIIWLNMGLIGDETDGHIDEIATFIAPGKVLCLITKDKEDPNYHRLQENFEILKSSKDARGRTFEVYTVEQPPATYLNGERLTLSYINFYMANQGIVMPAFGYESFDRLAYQLFVQIFPGYQITQIDALDVFSGGGGIHCITQQQPKSYKLGE.

Cysteine 333 acts as the Amidino-cysteine intermediate in catalysis.

Belongs to the agmatine deiminase family.

It carries out the reaction agmatine + H2O = N-carbamoylputrescine + NH4(+). The chain is Putative agmatine deiminase from Legionella pneumophila (strain Paris).